The chain runs to 341 residues: Oxidoreductase swnN (341 aa).

The protein belongs to the NmrA-type oxidoreductase family. Isoflavone reductase subfamily.

The protein operates within mycotoxin biosynthesis. Functionally, oxidoreductase; part of the gene cluster that mediates the biosynthesis of swainsonine (SW), a cytotoxic fungal alkaloid and a potential cancer therapy drug. Swainsonine production occurs via a multibranched pathway and is dispensable for fungal colonization of plants and infection of insect hosts. The first step of swainsonine biosynthesis is the production of the precursor pipecolic acid (PA) via conversion of L-lysine (Lys) to 1-piperideine-6-carboxylate (P6C) by the aminotransferase swnA, the latter being further reduced to PA by the reductase swnR. PA can be converted from lysine by both the SW biosynthetic cluster and the unclustered genes such as lysine cyclodeaminase. The PKS-NRPS hybrid synthetase swnK uptakes and condensates PA and malonyl-CoA with and without skipping of the ketoreductase (KR) domain in order to produce 3 intermediates, 1-oxoindolizidine, (1S)-1-hydroxyindolizin, and (1R)-1-hydroxyindolizine; with the transisomer (1S)-1-hydroxyindolizin being predominant. The terminal thioester reductase (TE) domain of swnK is involved in reduction of the thioester bond to release the intermediate aldehydes. The oxidoreductase swnN could contribute to the reduction of 1-oxoindolizidine to (1S)-1-hydroxyindolizin and (1R)-1-hydroxyindolizine, contributing to the major route of SW production. The dioxygenase swnH2 would be responsible for the oxidization of (1R)-1-hydroxyindolizine into (1R,2S)-1,2-dihydroxyindolizine and of (1S)-1-hydroxyindolizin to yield both (1R,2S)-1,2-dihydroxyindolizine and (1S,2S)-1,2-dihydroxyindolizine. The dioxygenase swnH1 then performs the conversion of the 1,2-dihydroxyindolizine epimers to SW. This Metarhizium robertsii (strain ARSEF 23 / ATCC MYA-3075) (Metarhizium anisopliae (strain ARSEF 23)) protein is Oxidoreductase swnN.